Here is a 649-residue protein sequence, read N- to C-terminus: MKNRSPSPPLHVHVDESTPVHVHIKKSSRPPAKTQQGAKLKKKGMGNLRRSATVKTKVPWIPPGKSSLRDAGLKWEGLTHRLDITPPDTERMFSALRMSDLSTDEEEMKRSKMNSYEEKIATLMSEMGTLKHELELQKREKYLGKCEEQLAASKRLLEAQQEELAEVSQELVETENENVWLKRSLDRIQEEKGLSILQKQQLQEEKAHLLAKLLEAETDGAEAAKQVTLLSDTIQRLKHEKRMTSTDINLLTRQKELLLQKLNTFEDTNRSLRTLLREQHRQETETYRLMEQKEMLLKKLSDADTEKMHLQLKLHEQEEKVEDLLAQLKTEKDLSKTASEVSKSIESTKAHLQGQLRTREAENNRLSVQIRNLERNEAHQKEEIVKLMEQLTELKQKVDSEKEALKKSVRAQKQRAERSEETLEMLNRQLVGNDSELAKALSSAETWRSRYNKLMKESSQHEEEVAVLSNRLKGLLGESHGIEERGRLERDSLLEKLHQQTTENTCLRLEHEKLKASLTTVEEKLSLAQSEVQQLKNSLRQYEGLVDTYKEQLQKSRQEANSISLQLEMSEKENKNIKEDMNLELEQMRRKFQNRLSELEHLPEILKSTELDLQECHQQLRSYEQKSSELSSTISDLRTRVRNWRNCAL.

The disordered stretch occupies residues 1 to 65; the sequence is MKNRSPSPPL…TKVPWIPPGK (65 aa). Coiled-coil stretches lie at residues 137-219, 247-426, and 464-649; these read QKRE…AETD, DINL…LEML, and EVAV…NCAL. Residues 339–358 are disordered; it reads SEVSKSIESTKAHLQGQLRT.

The protein belongs to the ODF2 family. In terms of assembly, self-associates. Associates with microtubules and forms a fibrillar structure partially linked to the microtubule network.

It is found in the cytoplasm. Its subcellular location is the cytoskeleton. The protein resides in the microtubule organizing center. It localises to the centrosome. The protein localises to the cell projection. It is found in the cilium. Its subcellular location is the centriole. The protein resides in the spindle pole. It localises to the flagellum. Seems to be a major form of sperm tail outer dense fibers. The protein is Outer dense fiber protein 2 (odf2) of Xenopus laevis (African clawed frog).